The sequence spans 212 residues: uncharacterized protein (212 aa).

S-adenosyl-L-methionine is bound by residues glycine 53 and glutamate 74.

It belongs to the methyltransferase superfamily. YrrT family.

In terms of biological role, could be a S-adenosyl-L-methionine-dependent methyltransferase. This is an uncharacterized protein from Exiguobacterium sibiricum (strain DSM 17290 / CCUG 55495 / CIP 109462 / JCM 13490 / 255-15).